Reading from the N-terminus, the 351-residue chain is Adenine deaminase (351 aa).

The Zn(2+) site is built by H20, H22, and H200. E203 (proton donor) is an active-site residue. Zn(2+) is bound at residue D281. D282 serves as a coordination point for substrate.

The protein belongs to the metallo-dependent hydrolases superfamily. Adenosine and AMP deaminases family. Adenine deaminase type 2 subfamily. The cofactor is Zn(2+).

The catalysed reaction is adenine + H2O + H(+) = hypoxanthine + NH4(+). In terms of biological role, catalyzes the hydrolytic deamination of adenine to hypoxanthine. Plays an important role in the purine salvage pathway and in nitrogen catabolism. This is Adenine deaminase from Cupriavidus necator (strain ATCC 17699 / DSM 428 / KCTC 22496 / NCIMB 10442 / H16 / Stanier 337) (Ralstonia eutropha).